The following is a 76-amino-acid chain: Envelope small membrane protein (76 aa).

At 1 to 14 (MLQLVNDNGLVVNV) the chain is on the virion surface side. The helical transmembrane segment at 15 to 35 (ILWLFVLFFLLIISITFVQLV) threads the bilayer. The Intravirion segment spans residues 36-76 (NLCFTCHRLCNSAVYTPIGRLYRVYKSYMRIDPLPSTVIDV).

Belongs to the alphacoronaviruses E protein family. As to quaternary structure, homopentamer. Interacts with membrane protein M in the budding compartment of the host cell, which is located between endoplasmic reticulum and the Golgi complex. Interacts with Nucleoprotein. Interacts with host IRF3; this interaction inhibits type I IFN production.

It localises to the host Golgi apparatus membrane. The protein resides in the host endoplasmic reticulum. Its function is as follows. Plays a central role in virus morphogenesis and assembly. Acts as a viroporin and self-assembles in host membranes forming pentameric protein-lipid pores that allow ion transport. Also plays a role in the induction of apoptosis. Counteracts the production of type I interferon by interacting with host IRF3 component and preventing its translocation to the host nucleus. The polypeptide is Envelope small membrane protein (Sus scrofa (Pig)).